A 163-amino-acid polypeptide reads, in one-letter code: Probable protein tyrosine phosphatase type IVA B (163 aa).

In terms of domain architecture, Tyrosine-protein phosphatase spans 10–161; the sequence is TIIESSTHKF…YKASKKAGCK (152 aa). A disulfide bridge connects residues cysteine 49 and cysteine 104. Catalysis depends on aspartate 70, which acts as the Proton donor. The active-site Phosphocysteine intermediate is the cysteine 104. Phosphate is bound at residue 105-110; sequence IAGLGR. Arginine 110 provides a ligand contact to substrate. The residue at position 160 (cysteine 160) is a Cysteine methyl ester. A lipid anchor (S-farnesyl cysteine) is attached at cysteine 160. Positions 161-163 are cleaved as a propeptide — removed in mature form; sequence KIM.

This sequence belongs to the protein-tyrosine phosphatase family.

The protein localises to the membrane. It catalyses the reaction O-phospho-L-tyrosyl-[protein] + H2O = L-tyrosyl-[protein] + phosphate. This Dictyostelium discoideum (Social amoeba) protein is Probable protein tyrosine phosphatase type IVA B.